Reading from the N-terminus, the 444-residue chain is Cadaverine/lysine antiporter (444 aa).

Helical transmembrane passes span 7-27 (IGLF…GIAL), 35-55 (IGGI…SLAY), 95-115 (IGNL…FPVL), 123-143 (IACI…GTWV), 149-169 (IGLV…WHWF), 193-213 (ILLC…TGMV), 222-242 (LATM…TQVL), 273-293 (LVSA…MMLV), 323-343 (LLLA…MNSA), 354-374 (LTGI…VDLI), 384-404 (FVSL…LMGA), and 405-425 (SSFE…FYAR).

The protein belongs to the amino acid-polyamine-organocation (APC) superfamily. Basic amino acid/polyamine antiporter (APA) (TC 2.A.3.2) family.

The protein resides in the cell inner membrane. It catalyses the reaction cadaverine(in) + L-lysine(out) = cadaverine(out) + L-lysine(in). Functionally, under acidic conditions, in the presence of lysine, functions as a cadaverine:lysine antiporter that facilitates the excretion of cadaverine and the uptake of lysine. In Escherichia coli O157:H7, this protein is Cadaverine/lysine antiporter (cadB).